The primary structure comprises 181 residues: Prepronociceptin (181 aa).

The first 19 residues, 1 to 19 (MKILFCDVLLLSLLSSVFS), serve as a signal peptide directing secretion. Residues 20-95 (SCPEDCLTCQ…QSKASEMQHL (76 aa)) constitute a propeptide that is removed on maturation. The segment at 103–125 (SVVQARDAEPEADAEPVADEADE) is disordered. Repeat copies occupy residues 109–114 (DAEPEA) and 115–120 (DAEPVA). Residues 109 to 120 (DAEPEADAEPVA) form a 2 X 6 AA tandem repeats of D-A-E-P-X-A region. Acidic residues predominate over residues 112 to 125 (PEADAEPVADEADE). The propeptide occupies 174 to 181 (TLHQNGNV).

The protein belongs to the opioid neuropeptide precursor family. In terms of processing, specific enzymatic cleavages at paired basic residues probably yield other active peptides besides nociceptin. The N-terminal domain contains 6 conserved cysteines thought to be involved in disulfide bonding and/or processing. In terms of tissue distribution, expressed predominantly in the spinal cord and brain, being more abundant in the hypothalamus and striatum. Also found in small amounts in ovary.

Its subcellular location is the secreted. Functionally, ligand of the opioid receptor-like receptor OPRL1. It may act as a transmitter in the brain by modulating nociceptive and locomotor behavior. May be involved in neuronal differentiation and development. Blocks nociceptin action in pain transmission by inhibiting nociceptin-induced hyperalgesia and allodynia. In terms of biological role, has potent analgesic activity. The protein is Prepronociceptin (Pnoc) of Rattus norvegicus (Rat).